The sequence spans 223 residues: Urease accessory protein UreF (223 aa).

This sequence belongs to the UreF family. UreD, UreF and UreG form a complex that acts as a GTP-hydrolysis-dependent molecular chaperone, activating the urease apoprotein by helping to assemble the nickel containing metallocenter of UreC. The UreE protein probably delivers the nickel.

The protein resides in the cytoplasm. Required for maturation of urease via the functional incorporation of the urease nickel metallocenter. This Rhizobium johnstonii (strain DSM 114642 / LMG 32736 / 3841) (Rhizobium leguminosarum bv. viciae) protein is Urease accessory protein UreF.